Here is a 259-residue protein sequence, read N- to C-terminus: MLKIADTTFTSRLFTGTGKFATPTLMAEAIKASGSQLVTMAMKRVDLKNGNDDLIAPLKSLGIKLLPNTSGAKTAQEAVFAARLAKEAFDTHWIKLEIHPDTKYLLPDPIETLKAAELLVKEGFVVLPYCSADPVLCRRLEEVGCAAVMPLGSPIGSNQGLQTRDFLRIIIEQTSIPVVVDAGIGAPSHALEALELGADAVLVNTAIAVAKNPVLMAQAFKAAIDAGELARQSGLAVPTSITHMQAQASSPLTQYLEAF.

The active-site Schiff-base intermediate with DXP is Lys-95. Residues Gly-156, 182 to 183 (AG), and 204 to 205 (NT) each bind 1-deoxy-D-xylulose 5-phosphate.

Belongs to the ThiG family. As to quaternary structure, homotetramer. Forms heterodimers with either ThiH or ThiS.

The protein localises to the cytoplasm. The enzyme catalyses [ThiS sulfur-carrier protein]-C-terminal-Gly-aminoethanethioate + 2-iminoacetate + 1-deoxy-D-xylulose 5-phosphate = [ThiS sulfur-carrier protein]-C-terminal Gly-Gly + 2-[(2R,5Z)-2-carboxy-4-methylthiazol-5(2H)-ylidene]ethyl phosphate + 2 H2O + H(+). It participates in cofactor biosynthesis; thiamine diphosphate biosynthesis. Functionally, catalyzes the rearrangement of 1-deoxy-D-xylulose 5-phosphate (DXP) to produce the thiazole phosphate moiety of thiamine. Sulfur is provided by the thiocarboxylate moiety of the carrier protein ThiS. In vitro, sulfur can be provided by H(2)S. The sequence is that of Thiazole synthase from Proteus mirabilis (strain HI4320).